The primary structure comprises 236 residues: Leucyl/phenylalanyl-tRNA--protein transferase (236 aa).

Belongs to the L/F-transferase family.

The protein localises to the cytoplasm. The enzyme catalyses N-terminal L-lysyl-[protein] + L-leucyl-tRNA(Leu) = N-terminal L-leucyl-L-lysyl-[protein] + tRNA(Leu) + H(+). It catalyses the reaction N-terminal L-arginyl-[protein] + L-leucyl-tRNA(Leu) = N-terminal L-leucyl-L-arginyl-[protein] + tRNA(Leu) + H(+). The catalysed reaction is L-phenylalanyl-tRNA(Phe) + an N-terminal L-alpha-aminoacyl-[protein] = an N-terminal L-phenylalanyl-L-alpha-aminoacyl-[protein] + tRNA(Phe). Functions in the N-end rule pathway of protein degradation where it conjugates Leu, Phe and, less efficiently, Met from aminoacyl-tRNAs to the N-termini of proteins containing an N-terminal arginine or lysine. The sequence is that of Leucyl/phenylalanyl-tRNA--protein transferase from Vibrio campbellii (strain ATCC BAA-1116).